The primary structure comprises 278 residues: Cytoplasmic envelopment protein 1 (278 aa).

It belongs to the herpesviridae cytoplasmic envelopment protein 1 family. In terms of assembly, interacts with BSRF1 tegument protein; the BBRF2-BSRF1 complexes oligomerize and might play a role in tethering the viral nucleocapsids to the host Golgi membrane during secondary envelopment.

It localises to the virion. The protein localises to the virion tegument. The protein resides in the host cytoplasm. Its subcellular location is the host Golgi apparatus. In terms of biological role, plays a critical role in cytoplasmic virus egress. Participates in the final step of tegumentation and envelope acquisition within the host cytoplasm. This is Cytoplasmic envelopment protein 1 from Homo sapiens (Human).